The sequence spans 448 residues: Tubulin beta-1 chain (448 aa).

Gln-11, Glu-69, Ser-138, Gly-142, Thr-143, Gly-144, Asn-204, and Asn-226 together coordinate GTP. Mg(2+) is bound at residue Glu-69. Positions 428 to 448 are disordered; it reads AGIGDDEEEDEEGVMGEEIDA. Residues 430-448 are compositionally biased toward acidic residues; it reads IGDDEEEDEEGVMGEEIDA.

This sequence belongs to the tubulin family. As to quaternary structure, dimer of alpha and beta chains. A typical microtubule is a hollow water-filled tube with an outer diameter of 25 nm and an inner diameter of 15 nM. Alpha-beta heterodimers associate head-to-tail to form protofilaments running lengthwise along the microtubule wall with the beta-tubulin subunit facing the microtubule plus end conferring a structural polarity. Microtubules usually have 13 protofilaments but different protofilament numbers can be found in some organisms and specialized cells. Mg(2+) serves as cofactor.

Its subcellular location is the cytoplasm. The protein resides in the cytoskeleton. Tubulin is the major constituent of microtubules, a cylinder consisting of laterally associated linear protofilaments composed of alpha- and beta-tubulin heterodimers. Microtubules grow by the addition of GTP-tubulin dimers to the microtubule end, where a stabilizing cap forms. Below the cap, tubulin dimers are in GDP-bound state, owing to GTPase activity of alpha-tubulin. This chain is Tubulin beta-1 chain (TUB-1), found in Echinococcus multilocularis (Fox tapeworm).